We begin with the raw amino-acid sequence, 893 residues long: Translation initiation factor IF-2 (893 aa).

Disordered regions lie at residues 51 to 203 and 216 to 300; these read KEHG…AEAE and EENE…SMQH. 3 stretches are compositionally biased toward basic and acidic residues: residues 102–203, 216–238, and 245–261; these read ALEE…AEAE, EENE…DADY, and HARE…EQQP. The region spanning 392–561 is the tr-type G domain; it reads GRAPVVTIMG…LLQSEVLELT (170 aa). Residues 401–408 are G1; it reads GHVDHGKT. Residue 401–408 participates in GTP binding; sequence GHVDHGKT. Residues 426 to 430 form a G2 region; that stretch reads GITQH. The interval 447–450 is G3; the sequence is DTPG. Residues 447-451 and 501-504 each bind GTP; these read DTPGH and NKID. The interval 501 to 504 is G4; that stretch reads NKID. The interval 537–539 is G5; sequence SAK.

It belongs to the TRAFAC class translation factor GTPase superfamily. Classic translation factor GTPase family. IF-2 subfamily.

The protein resides in the cytoplasm. One of the essential components for the initiation of protein synthesis. Protects formylmethionyl-tRNA from spontaneous hydrolysis and promotes its binding to the 30S ribosomal subunits. Also involved in the hydrolysis of GTP during the formation of the 70S ribosomal complex. This Aliivibrio fischeri (strain MJ11) (Vibrio fischeri) protein is Translation initiation factor IF-2.